Consider the following 137-residue polypeptide: Transcription antitermination protein NusB (137 aa).

This sequence belongs to the NusB family.

Functionally, involved in transcription antitermination. Required for transcription of ribosomal RNA (rRNA) genes. Binds specifically to the boxA antiterminator sequence of the ribosomal RNA (rrn) operons. This chain is Transcription antitermination protein NusB, found in Clavibacter sepedonicus (Clavibacter michiganensis subsp. sepedonicus).